We begin with the raw amino-acid sequence, 528 residues long: tRNA pseudouridine synthase 1 (528 aa).

A disordered region spans residues 1–59; that stretch reads MPSDASTGYVDDQPGDEAYKRGALYKQTKARRADYDSDKEAKRPCTEDSDVALAGTSEE. Basic and acidic residues predominate over residues 31–46; the sequence is RRADYDSDKEAKRPCT. Aspartate 126 acts as the Nucleophile in catalysis. Composition is skewed to polar residues over residues 486 to 495 and 506 to 528; these read SSSPQENASP and GDNT…QSDA. A disordered region spans residues 486 to 528; sequence SSSPQENASPEAQKAPETPAGDNTISAEQPKTATEVPTTQSDA.

Belongs to the tRNA pseudouridine synthase TruA family. Zn(2+) is required as a cofactor.

It localises to the nucleus. It catalyses the reaction a uridine in tRNA = a pseudouridine in tRNA. The enzyme catalyses uridine in snRNA = pseudouridine in snRNA. The catalysed reaction is a uridine in mRNA = a pseudouridine in mRNA. Formation of pseudouridine at positions 27 and 28 in the anticodon stem and loop of transfer RNAs; at positions 34 and 36 of intron-containing precursor tRNA(Ile) and at position 35 in the intron-containing tRNA(Tyr). Catalyzes pseudouridylation at position 44 in U2 snRNA. Also catalyzes pseudouridylation of mRNAs. The sequence is that of tRNA pseudouridine synthase 1 (PUS1) from Eremothecium gossypii (strain ATCC 10895 / CBS 109.51 / FGSC 9923 / NRRL Y-1056) (Yeast).